The following is a 322-amino-acid chain: Transcription factor Atoh8 (322 aa).

3 disordered regions span residues 77-96 (PVPA…DTAR), 101-144 (IRAP…EAHS), and 159-221 (PPAR…ATAA). Residues 101-111 (IRAPEVSDARK) are compositionally biased toward basic and acidic residues. Positions 231–244 (TRRLLANARERTRV) are basic motif; degenerate. The region spanning 231 to 283 (TRRLLANARERTRVHTISAAFEALRKQVPCYSYGQKLSKLAILRIACNYILSL) is the bHLH domain. The helix-loop-helix motif stretch occupies residues 245–283 (HTISAAFEALRKQVPCYSYGQKLSKLAILRIACNYILSL).

Efficient DNA binding requires dimerization with another bHLH protein. Interacts with NEUROG3 and NEUROD1. Interacts with ZFPM2; mediates indirect interaction with GATA4. Forms a heterodimer with TCF3; repress transcription of TCF3 and TCF3/NEUROG3 dimer-induced transactivation of E box-dependent promoters. As to expression, expressed by subsets of mature neurons. Expressed in kidney (podocytes). Expression is restricted to the atria, lung mesenchyme, and vascular smooth muscle.

It is found in the nucleus. Its subcellular location is the nucleus speckle. The protein localises to the cytoplasm. Transcription factor that binds a palindromic (canonical) core consensus DNA sequence 5'-CANNTG- 3' known as an E-box element, possibly as a heterodimer with other bHLH proteins. Regulates endothelial cell proliferation, migration and tube-like structures formation. Modulates endothelial cell differentiation through NOS3. May be implicated in specification and differentiation of neuronal cell lineages in the brain. May participate in kidney development and may be involved in podocyte differentiation. During early embryonic development is involved in tissue-specific differentiation processes that are dependent on class II bHLH factors and namely modulates the differentiation program initiated by the pro-endocrine factor NEUROG3. During myogenesis, may play a role during the transition of myoblasts from the proliferative phase to the differentiation phase. Positively regulates HAMP transcription in two ways, firstly by acting directly on the HAMP promoter via E-boxes binding and indirectly through increased phosphorylation of SMAD protein complex. Repress NEUROG3-dependent gene activation in a gene-specific manner through at least two mechanisms; requires only either the sequestering of a general partner such as TCF3 through heterodimerization, either also requires binding of the bHLH domain to DNA via a basic motif. This chain is Transcription factor Atoh8, found in Mus musculus (Mouse).